The chain runs to 552 residues: Low-affinity Fe(2+) transport protein (552 aa).

At 1–97 (MGKIAEFLGN…DFLVRVAGSQ (97 aa)) the chain is on the extracellular side. A Glycyl lysine isopeptide (Lys-Gly) (interchain with G-Cter in ubiquitin) cross-link involves residue Lys39. Residues Ser48 and Ser50 each carry the phosphoserine modification. A helical membrane pass occupies residues 98–118 (AVFFIVWIILIIWVVIGIVYN). Residues 119 to 225 (APFNWQVVMQ…SNVASRYMGS (107 aa)) lie on the Cytoplasmic side of the membrane. A helical membrane pass occupies residues 226 to 246 (IAAMVIFWIGIFVWIGCGAIP). At 247-271 (KDAGNTPPYTGETTGSNPRLKKFSD) the chain is on the extracellular side. Residues 272-292 (AWQMYINTAVAVSLLICTTFL) form a helical membrane-spanning segment. The Cytoplasmic portion of the chain corresponds to 293–354 (QNIRARHDYF…GRKMIDWYAD (62 aa)). Residues 355–375 (IIGTGIGVLIGVAVFATWIGI) form a helical membrane-spanning segment. At 376–383 (GSPMKWDD) the chain is on the extracellular side. The helical transmembrane segment at 384–404 (NWWLIIGTYTGLIGFLDGFVL) threads the bilayer. At 405–465 (REVYFRIVQH…SQYINRICST (61 aa)) the chain is on the cytoplasmic side. Residues 466–486 (PWSVLVSVIIIIGLICIASGL) form a helical membrane-spanning segment. The Extracellular portion of the chain corresponds to 487–493 (RWSTTGQ). The chain crosses the membrane as a helical span at residues 494 to 514 (LIANTPTMIIEEFFLLVLLQA). Over 515-552 (HNWADRQRRVEVTALYARRRILLSYVEKRFPEVMMLEK) the chain is Cytoplasmic.

This sequence belongs to the FET4 family.

The protein resides in the membrane. In terms of biological role, required for Fe(2+) ion low affinity uptake. The polypeptide is Low-affinity Fe(2+) transport protein (FET4) (Saccharomyces cerevisiae (strain ATCC 204508 / S288c) (Baker's yeast)).